Here is a 161-residue protein sequence, read N- to C-terminus: Large ribosomal subunit protein mL50 (161 aa).

Positions 27 to 51 (WGGHSKKEEKEVEENSIIPQEKKEP) are disordered.

It belongs to the mitochondrion-specific ribosomal protein mL50 family. Component of the mitochondrial ribosome large subunit (39S) which comprises a 16S rRNA and about 50 distinct proteins.

It localises to the mitochondrion. In Gallus gallus (Chicken), this protein is Large ribosomal subunit protein mL50 (MRPL50).